A 701-amino-acid polypeptide reads, in one-letter code: DNA ligase (701 aa).

NAD(+)-binding positions include 58-62 (DYEYD), 107-108 (SL), and Glu-138. Lys-140 acts as the N6-AMP-lysine intermediate in catalysis. NAD(+)-binding residues include Arg-161, Glu-199, Lys-323, and Lys-347. The Zn(2+) site is built by Cys-441, Cys-444, Cys-459, and Cys-464. Residues 621 to 701 (EKRGKLAGLN…EEFLKMIGQQ (81 aa)) form the BRCT domain.

The protein belongs to the NAD-dependent DNA ligase family. LigA subfamily. The cofactor is Mg(2+). Requires Mn(2+) as cofactor.

It carries out the reaction NAD(+) + (deoxyribonucleotide)n-3'-hydroxyl + 5'-phospho-(deoxyribonucleotide)m = (deoxyribonucleotide)n+m + AMP + beta-nicotinamide D-nucleotide.. DNA ligase that catalyzes the formation of phosphodiester linkages between 5'-phosphoryl and 3'-hydroxyl groups in double-stranded DNA using NAD as a coenzyme and as the energy source for the reaction. It is essential for DNA replication and repair of damaged DNA. This chain is DNA ligase, found in Sulfurihydrogenibium azorense (strain DSM 15241 / OCM 825 / Az-Fu1).